The sequence spans 361 residues: 5-formaminoimidazole-4-carboxamide-1-(beta)-D-ribofuranosyl 5'-monophosphate synthetase (361 aa).

5-amino-1-(5-phospho-beta-D-ribosyl)imidazole-4-carboxamide contacts are provided by histidine 27 and serine 94. An ATP-grasp domain is found at 116-348; it reads RAILRWEAER…MGQRIAKEIK (233 aa). Residues 146–208 and glutamate 230 each bind ATP; that span reads PDDI…ANYC. Asparagine 258 is a 5-amino-1-(5-phospho-beta-D-ribosyl)imidazole-4-carboxamide binding site. Mg(2+) is bound by residues glutamine 297 and glutamate 310.

It belongs to the phosphohexose mutase family. Mg(2+) serves as cofactor. Mn(2+) is required as a cofactor.

It catalyses the reaction 5-amino-1-(5-phospho-beta-D-ribosyl)imidazole-4-carboxamide + formate + ATP = 5-formamido-1-(5-phospho-D-ribosyl)imidazole-4-carboxamide + ADP + phosphate. It functions in the pathway purine metabolism; IMP biosynthesis via de novo pathway; 5-formamido-1-(5-phospho-D-ribosyl)imidazole-4-carboxamide from 5-amino-1-(5-phospho-D-ribosyl)imidazole-4-carboxamide (formate route): step 1/1. Functionally, catalyzes the ATP- and formate-dependent formylation of 5-aminoimidazole-4-carboxamide-1-beta-d-ribofuranosyl 5'-monophosphate (AICAR) to 5-formaminoimidazole-4-carboxamide-1-beta-d-ribofuranosyl 5'-monophosphate (FAICAR) in the absence of folates. This Methanococcus maripaludis (strain C5 / ATCC BAA-1333) protein is 5-formaminoimidazole-4-carboxamide-1-(beta)-D-ribofuranosyl 5'-monophosphate synthetase.